Here is a 138-residue protein sequence, read N- to C-terminus: Small ribosomal subunit protein uS11c (138 aa).

A disordered region spans residues 1-22 (MAKAIPKISSRRNGRIGSRKGA). The span at 9-22 (SSRRNGRIGSRKGA) shows a compositional bias: basic residues.

It belongs to the universal ribosomal protein uS11 family. Part of the 30S ribosomal subunit.

It is found in the plastid. The protein localises to the chloroplast. In Nicotiana tomentosiformis (Tobacco), this protein is Small ribosomal subunit protein uS11c.